The sequence spans 208 residues: Small ribosomal subunit protein uS4 (208 aa).

The interval 29 to 48 is disordered; that stretch reads MERRPYGPGQHGRARRKQDS. The S4 RNA-binding domain maps to 95–155; sequence QRLDALVLRA…ERSEKMVPFQ (61 aa).

This sequence belongs to the universal ribosomal protein uS4 family. In terms of assembly, part of the 30S ribosomal subunit. Contacts protein S5. The interaction surface between S4 and S5 is involved in control of translational fidelity.

In terms of biological role, one of the primary rRNA binding proteins, it binds directly to 16S rRNA where it nucleates assembly of the body of the 30S subunit. Functionally, with S5 and S12 plays an important role in translational accuracy. In Micrococcus luteus (strain ATCC 4698 / DSM 20030 / JCM 1464 / CCM 169 / CCUG 5858 / IAM 1056 / NBRC 3333 / NCIMB 9278 / NCTC 2665 / VKM Ac-2230) (Micrococcus lysodeikticus), this protein is Small ribosomal subunit protein uS4.